The chain runs to 227 residues: Extracellular deoxyribonuclease (227 aa).

The signal sequence occupies residues 1–20 (MFRPLLSFTLARLVSLPLHA).

Belongs to the EndA/NucM nuclease family.

It localises to the secreted. The chain is Extracellular deoxyribonuclease from Aeromonas hydrophila.